A 412-amino-acid chain; its full sequence is Peptidase T (412 aa).

H83 is a binding site for Zn(2+). D85 is an active-site residue. D145 is a binding site for Zn(2+). E179 serves as the catalytic Proton acceptor. 3 residues coordinate Zn(2+): E180, D202, and H384.

This sequence belongs to the peptidase M20B family. It depends on Zn(2+) as a cofactor.

The protein resides in the cytoplasm. The enzyme catalyses Release of the N-terminal residue from a tripeptide.. Its function is as follows. Cleaves the N-terminal amino acid of tripeptides. The protein is Peptidase T of Fusobacterium nucleatum subsp. nucleatum (strain ATCC 25586 / DSM 15643 / BCRC 10681 / CIP 101130 / JCM 8532 / KCTC 2640 / LMG 13131 / VPI 4355).